A 301-amino-acid polypeptide reads, in one-letter code: MPGIKEIRTKIKSVQNTRKITKAMEMVAASKMRKAQERMRAGRPYATKVREIAAHLMQANPEYGHPYLVEREVKAVGVVLVTTDKGLCGGLNTNISRVTLSKLKEFEQRSIKVQATAFGNKGLGLLTRIGAKLVSQEVQLGDKPDLDRLLGAIKVQLDDYLEGRIDALYVATTRFVNTMRQEPVFLRLLPLSNGLDDPFQSGVETLAKTAEIKSDYSWDYIYEPDAKSVIDDLLQRYVEGLLYQAVAENMASEQSARMVAMKSASDNAKKVIGDLQLVYNKTRQAAITKEISEIVGGAAAV.

This sequence belongs to the ATPase gamma chain family. In terms of assembly, F-type ATPases have 2 components, CF(1) - the catalytic core - and CF(0) - the membrane proton channel. CF(1) has five subunits: alpha(3), beta(3), gamma(1), delta(1), epsilon(1). CF(0) has three main subunits: a, b and c.

The protein localises to the cell inner membrane. In terms of biological role, produces ATP from ADP in the presence of a proton gradient across the membrane. The gamma chain is believed to be important in regulating ATPase activity and the flow of protons through the CF(0) complex. In Bordetella parapertussis (strain 12822 / ATCC BAA-587 / NCTC 13253), this protein is ATP synthase gamma chain.